A 195-amino-acid polypeptide reads, in one-letter code: ATP-dependent Clp protease proteolytic subunit (195 aa).

The active-site Nucleophile is the S102. H125 is a catalytic residue.

Belongs to the peptidase S14 family. Component of the chloroplastic Clp protease core complex.

The protein localises to the plastid. The protein resides in the chloroplast stroma. It carries out the reaction Hydrolysis of proteins to small peptides in the presence of ATP and magnesium. alpha-casein is the usual test substrate. In the absence of ATP, only oligopeptides shorter than five residues are hydrolyzed (such as succinyl-Leu-Tyr-|-NHMec, and Leu-Tyr-Leu-|-Tyr-Trp, in which cleavage of the -Tyr-|-Leu- and -Tyr-|-Trp bonds also occurs).. Functionally, cleaves peptides in various proteins in a process that requires ATP hydrolysis. Has a chymotrypsin-like activity. Plays a major role in the degradation of misfolded proteins. The sequence is that of ATP-dependent Clp protease proteolytic subunit from Phaseolus vulgaris (Kidney bean).